The chain runs to 230 residues: Cytidylate kinase (230 aa).

ATP is bound at residue 12 to 20; it reads GPSGAGKGT.

Belongs to the cytidylate kinase family. Type 1 subfamily.

It is found in the cytoplasm. The catalysed reaction is CMP + ATP = CDP + ADP. It catalyses the reaction dCMP + ATP = dCDP + ADP. This is Cytidylate kinase from Shewanella loihica (strain ATCC BAA-1088 / PV-4).